The sequence spans 368 residues: Glutamate 5-kinase (368 aa).

ATP is bound at residue Lys-15. Ser-55, Asp-143, and Asn-155 together coordinate substrate. Residues 175-176 (SD) and 217-223 (SGGMVSK) each bind ATP. The PUA domain maps to 277-354 (EGRLTIDAGA…DAQEAALGYA (78 aa)).

The protein belongs to the glutamate 5-kinase family.

Its subcellular location is the cytoplasm. The enzyme catalyses L-glutamate + ATP = L-glutamyl 5-phosphate + ADP. It participates in amino-acid biosynthesis; L-proline biosynthesis; L-glutamate 5-semialdehyde from L-glutamate: step 1/2. Functionally, catalyzes the transfer of a phosphate group to glutamate to form L-glutamate 5-phosphate. This is Glutamate 5-kinase from Sphingopyxis alaskensis (strain DSM 13593 / LMG 18877 / RB2256) (Sphingomonas alaskensis).